The primary structure comprises 465 residues: UDP-N-acetylglucosamine 1-carboxyvinyltransferase (465 aa).

22 to 23 provides a ligand contact to phosphoenolpyruvate; the sequence is KN. A UDP-N-acetyl-alpha-D-glucosamine-binding site is contributed by Arg-94. The active-site Proton donor is Cys-119. Cys-119 is modified (2-(S-cysteinyl)pyruvic acid O-phosphothioketal). Residues Asp-313 and Val-335 each coordinate UDP-N-acetyl-alpha-D-glucosamine.

This sequence belongs to the EPSP synthase family. MurA subfamily.

It is found in the cytoplasm. It catalyses the reaction phosphoenolpyruvate + UDP-N-acetyl-alpha-D-glucosamine = UDP-N-acetyl-3-O-(1-carboxyvinyl)-alpha-D-glucosamine + phosphate. It participates in cell wall biogenesis; peptidoglycan biosynthesis. Cell wall formation. Adds enolpyruvyl to UDP-N-acetylglucosamine. The polypeptide is UDP-N-acetylglucosamine 1-carboxyvinyltransferase (Protochlamydia amoebophila (strain UWE25)).